A 413-amino-acid polypeptide reads, in one-letter code: Serine protease inhibitor A3L (413 aa).

Residues 1–28 form the signal peptide; it reads MAFIAALGLLMAGICPAVLCDGTLGRDT. Ser-30 is modified (phosphoserine). N-linked (GlcNAc...) asparagine glycans are attached at residues Asn-102, Asn-182, Asn-220, and Asn-267. Residues 365-389 form an RCL region; it reads GTEATAATGVATVIRRQPRTLNFNR.

It belongs to the serpin family. In terms of processing, N-glycosylated. Liver.

It localises to the secreted. This is Serine protease inhibitor A3L (Serpina3l) from Rattus norvegicus (Rat).